The sequence spans 3461 residues: Abnormal spindle-like microcephaly-associated protein homolog (3461 aa).

Residues methionine 1–glutamate 30 form a disordered region. A phosphoserine mark is found at serine 279, serine 282, serine 367, serine 392, serine 426, and serine 606. One can recognise a Calponin-homology (CH) 1 domain in the interval lysine 921–glutamine 1057. The stretch at valine 1058 to threonine 1077 forms a coiled coil. Serine 1104 is modified (phosphoserine). The Calponin-homology (CH) 2 domain occupies serine 1111 to leucine 1262. 42 consecutive IQ domains span residues glutamate 1267–alanine 1296, glutamine 1348–glutamine 1379, leucine 1488–threonine 1517, arginine 1511–alanine 1540, lysine 1538–serine 1569, leucine 1583–glutamine 1614, threonine 1633–lysine 1662, isoleucine 1656–lysine 1685, methionine 1729–serine 1758, glutamine 1752–glutamine 1783, methionine 1775–arginine 1804, valine 1802–lysine 1831, glutamine 1825–lysine 1854, threonine 1875–arginine 1904, glutamate 1898–glutamine 1929, leucine 1948–glutamine 1979, glutamine 1971–glutamine 2002, threonine 2021–alanine 2050, tyrosine 2044–glutamine 2075, leucine 2094–lysine 2125, methionine 2117–glutamine 2148, isoleucine 2167–glutamine 2198, methionine 2190–threonine 2219, leucine 2240–glutamine 2271, leucine 2313–glutamine 2344, methionine 2336–glutamine 2367, glutamine 2386–glutamine 2417, methionine 2409–glutamine 2440, valine 2459–glutamine 2490, glutamine 2532–glutamine 2563, arginine 2666–glutamine 2697, methionine 2689–glutamine 2720, leucine 2739–alanine 2768, glutamine 2837–threonine 2866, glutamine 2860–glutamine 2891, valine 2910–lysine 2939, isoleucine 2933–alanine 2964, lysine 2955–glutamine 2986, arginine 3030–threonine 3059, leucine 3080–histidine 3111, glutamine 3182–lysine 3211, and isoleucine 3205–serine 3236.

It is found in the cytoplasm. The protein resides in the cytoskeleton. It localises to the spindle. The protein localises to the nucleus. Functionally, probable role in mitotic spindle regulation and coordination of mitotic processes. May have a preferential role in regulating neurogenesis. The protein is Abnormal spindle-like microcephaly-associated protein homolog (ASPM) of Felis catus (Cat).